The primary structure comprises 194 residues: Fe/S biogenesis protein NfuA (194 aa).

[4Fe-4S] cluster contacts are provided by cysteine 152 and cysteine 155.

This sequence belongs to the NfuA family. Homodimer. It depends on [4Fe-4S] cluster as a cofactor.

Its function is as follows. Involved in iron-sulfur cluster biogenesis. Binds a 4Fe-4S cluster, can transfer this cluster to apoproteins, and thereby intervenes in the maturation of Fe/S proteins. Could also act as a scaffold/chaperone for damaged Fe/S proteins. In Azotobacter vinelandii (strain DJ / ATCC BAA-1303), this protein is Fe/S biogenesis protein NfuA.